Reading from the N-terminus, the 176-residue chain is MAIHGIFFGSDTGNTENIAKMIQKQLGKDVADVHDIAKSSKEDLEAYDILLLGIPTWYYGEAQCDWDDFFPTLEEIDFNGKLVALFGCGDQEDYAEYFCDALGTIRDIIEPRGATIDADWPTAGYHFQASKGLADDDHFVGLAIDEDRHPELTADRVEKWVKQISEELHLDEILNA.

Residues 4-165 (HGIFFGSDTG…RVEKWVKQIS (162 aa)) enclose the Flavodoxin-like domain.

Belongs to the flavodoxin family. Requires FMN as cofactor.

Low-potential electron donor to a number of redox enzymes. This is Flavodoxin 1 (fldA) from Shigella flexneri.